The primary structure comprises 1122 residues: Phytochrome A (1122 aa).

Residues 1-11 (MSGSRPTQSSE) are compositionally biased toward polar residues. Residues 1 to 21 (MSGSRPTQSSEGSRRSRHSAR) are disordered. A GAF domain is found at 218–402 (SMERLCDTMV…VFAIHVNKEV (185 aa)). Cys323 serves as a coordination point for phytochromobilin. In terms of domain architecture, PAS 1 spans 618-688 (VTSEMVRLIE…RMLENALEGT (71 aa)). Positions 695 to 747 (FEIKTHLSRADAGPISLVVNACASRDLHENVVGVCFVAHDLTGQKTVMDKFTR) constitute a PAC domain. The PAS 2 domain maps to 748–822 (IEGDYKAIIQ…KNQEAFVNLG (75 aa)). Residues 902 to 1119 (YIKRQIRNPL…SFIITAELAA (218 aa)) enclose the Histidine kinase domain.

It belongs to the phytochrome family. As to quaternary structure, homodimer. Interacts with NDPK2 and PKS4. Stabilized by interactions with PAPP5 and FYPP3 which are enhanced in the phosphorylated Pfr form. Interacts with COP1/SPA1 complex. Binds, via its photosensory domain, to PTAC12/HMR when photoactivated; this interaction stimulates its localization to photobodies. Interacts with FHY1, FHL and FHY3, especially upon far-red (FR) light illumination; when underphosphorylated. Forms PHYA/FHY1/HFR1 complex. Binds to PIF3/PAP3. Post-translationally, phosphorylated. In terms of processing, contains one covalently linked phytochromobilin chromophore. In terms of tissue distribution, expressed in fruits, flowers, leaves, stems, seedlings and roots.

Its subcellular location is the cytoplasm. It is found in the nucleus. The protein localises to the nucleoplasm. It localises to the nucleus speckle. Its function is as follows. Regulatory photoreceptor which exists in two forms that are reversibly interconvertible by light: the Pr form that absorbs maximally in the red region of the spectrum and the Pfr form that absorbs maximally in the far-red region. Photoconversion of Pr to Pfr induces an array of morphogenetic responses, whereas reconversion of Pfr to Pr cancels the induction of those responses. Pfr controls the expression of a number of nuclear genes including those encoding the small subunit of ribulose-bisphosphate carboxylase, chlorophyll A/B binding protein, protochlorophyllide reductase, rRNA, etc. It also controls the expression of its own gene(s) in a negative feedback fashion. Involved in the flowering time regulation. Can phosphorylate FHY1 and, possibly, FHL, in red light conditions; this inactivates their co-shuttling to the nucleus. Regulates phototropic responses both in the nucleus (e.g. hypocotyl elongation and cotyledon opening under high-irradiance conditions and seed germination under very-low-fluence conditions) and in the cytoplasm (e.g. negative gravitropism in blue light and red-enhanced phototropism). Promotes seed germination, suppression of hypocotyl elongation, and randomization of hypocotyl growth orientation in far-red light; these responses to far-red light are repressed by UNE10/PIF8. Stabilizes UNE10/PIF8 but sequesters PIF3/PAP3 from its target genes promoters in far-red light. The chain is Phytochrome A from Arabidopsis thaliana (Mouse-ear cress).